A 158-amino-acid chain; its full sequence is Snaclec flavocetin-A subunit alpha (158 aa).

An N-terminal signal peptide occupies residues 1–23 (MERLIFVSFGLLVVILSLSGTGA). Cystine bridges form between cysteine 27–cysteine 38, cysteine 55–cysteine 152, and cysteine 127–cysteine 144. Positions 34–153 (YDRYCYQAFS…CGTENPFVCK (120 aa)) constitute a C-type lectin domain.

This sequence belongs to the snaclec family. As to quaternary structure, tetramer of heterodimers of alpha and beta subunits (alphabeta)(4); disulfide-linked. Expressed by the venom gland.

It localises to the secreted. Strong platelet aggregation inhibitor. Binds specifically to platelet glycoprotein Ibalpha (GP1BA) with high affinity and inhibits vWF-dependent platelet aggregation. Has also been observed to induce small agglutinates in washed platelets by binding to GPIb. The sequence is that of Snaclec flavocetin-A subunit alpha from Protobothrops flavoviridis (Habu).